The primary structure comprises 451 residues: Trigger factor (451 aa).

A PPIase FKBP-type domain is found at 173–258 (GDRVTLDFVG…LKKIEWAHLP (86 aa)).

The protein belongs to the FKBP-type PPIase family. Tig subfamily.

It is found in the cytoplasm. It catalyses the reaction [protein]-peptidylproline (omega=180) = [protein]-peptidylproline (omega=0). In terms of biological role, involved in protein export. Acts as a chaperone by maintaining the newly synthesized protein in an open conformation. Functions as a peptidyl-prolyl cis-trans isomerase. The sequence is that of Trigger factor from Cupriavidus pinatubonensis (strain JMP 134 / LMG 1197) (Cupriavidus necator (strain JMP 134)).